We begin with the raw amino-acid sequence, 1055 residues long: Endo-1,4-beta-xylanase A (1055 aa).

A signal peptide spans 1–29 (MRKKRRGFLNASTAVLVGILAGFLGVVLA). Residues 30–357 (ATGALGFAVR…TTSAEIKLEM (328 aa)) are a. The region spanning 360–688 (EEEIPALKDV…KLAYWAIVAP (329 aa)) is the GH10 domain. Glu498 serves as the catalytic Proton donor. Glu604 functions as the Nucleophile in the catalytic mechanism. CBM-cenC domains lie at 720–851 (PIEI…TNSQ) and 895–1040 (KSVA…PTNN).

Belongs to the glycosyl hydrolase 10 (cellulase F) family.

The catalysed reaction is Endohydrolysis of (1-&gt;4)-beta-D-xylosidic linkages in xylans.. In Thermotoga neapolitana, this protein is Endo-1,4-beta-xylanase A (xynA).